Reading from the N-terminus, the 736-residue chain is Poly(A) polymerase gamma (736 aa).

The residue at position 2 (Lys-2) is an N6-acetyllysine. Residues Ser-23 and Ser-29 each carry the phosphoserine modification. Residues Phe-99–Ser-101, Thr-108, Asp-112–Asp-114, Asp-166, Lys-227, Tyr-236, and Gly-245–Val-246 each bind ATP. Positions 112, 114, and 166 each coordinate Mg(2+). A disordered region spans residues Lys-506–Glu-564. The span at Leu-509–Leu-519 shows a compositional bias: polar residues. Over residues Ser-521–Asp-532 the composition is skewed to low complexity. Ser-525 carries the post-translational modification Phosphoserine. Residues Asn-539–Val-555 show a composition bias toward polar residues. Phosphoserine occurs at positions 599 and 648. A Phosphothreonine modification is found at Thr-654. Basic and acidic residues predominate over residues Asp-673 to Val-685. The tract at residues Asp-673 to Ala-720 is disordered. Phosphoserine occurs at positions 684 and 708.

It belongs to the poly(A) polymerase family. Mg(2+) is required as a cofactor. Mn(2+) serves as cofactor. In terms of tissue distribution, expressed predominantly in testis, and weakly in other tissues. Overexpressed in several tumors.

It is found in the nucleus. It carries out the reaction RNA(n) + ATP = RNA(n)-3'-adenine ribonucleotide + diphosphate. Its function is as follows. Responsible for the post-transcriptional adenylation of the 3'-terminal of mRNA precursors and several small RNAs including signal recognition particle (SRP) RNA, nuclear 7SK RNA, U2 small nuclear RNA, and ribosomal 5S RNA. In Homo sapiens (Human), this protein is Poly(A) polymerase gamma.